We begin with the raw amino-acid sequence, 317 residues long: Tenomodulin (317 aa).

Topologically, residues methionine 1 to lysine 30 are cytoplasmic. A helical; Signal-anchor for type II membrane protein membrane pass occupies residues isoleucine 31–serine 50. The Extracellular segment spans residues lysine 51–valine 317. In terms of domain architecture, BRICHOS spans glycine 93 to isoleucine 186. A glycan (N-linked (GlcNAc...) asparagine) is linked at asparagine 94. Cysteines 120 and 178 form a disulfide. Asparagine 180 carries N-linked (GlcNAc...) asparagine glycosylation. Serine 239 is subject to Phosphoserine.

This sequence belongs to the chondromodulin-1 family. In terms of tissue distribution, highly expressed in hypovascular connective tissues such as tendons. Also has strong expression in adipose tissue.

The protein localises to the membrane. Its subcellular location is the nucleus envelope. The protein resides in the cytoplasm. In terms of biological role, may be an angiogenesis inhibitor. In Homo sapiens (Human), this protein is Tenomodulin (TNMD).